The chain runs to 107 residues: Phosphoribosyl-ATP pyrophosphatase (107 aa).

Belongs to the PRA-PH family.

It localises to the cytoplasm. The catalysed reaction is 1-(5-phospho-beta-D-ribosyl)-ATP + H2O = 1-(5-phospho-beta-D-ribosyl)-5'-AMP + diphosphate + H(+). The protein operates within amino-acid biosynthesis; L-histidine biosynthesis; L-histidine from 5-phospho-alpha-D-ribose 1-diphosphate: step 2/9. The polypeptide is Phosphoribosyl-ATP pyrophosphatase (Sinorhizobium medicae (strain WSM419) (Ensifer medicae)).